We begin with the raw amino-acid sequence, 59 residues long: MAVPFRRTSKMKKRLRRTHFKLNVPGMTECPSCGEMKLSHRVCKACGSYNGKDINVKSN.

The protein belongs to the bacterial ribosomal protein bL32 family. In terms of assembly, part of the 50S ribosomal subunit.

This is Large ribosomal subunit protein bL32 (rpmF) from Bacillus subtilis (strain 168).